A 494-amino-acid chain; its full sequence is Cytochrome P450 2A3 (494 aa).

Ser131 is modified (phosphoserine). Lys379 carries the post-translational modification N6-acetyllysine. A heme-binding site is contributed by Cys439.

It belongs to the cytochrome P450 family. Requires heme as cofactor. In terms of tissue distribution, lung.

It localises to the endoplasmic reticulum membrane. The protein localises to the microsome membrane. It carries out the reaction an organic molecule + reduced [NADPH--hemoprotein reductase] + O2 = an alcohol + oxidized [NADPH--hemoprotein reductase] + H2O + H(+). In terms of biological role, cytochromes P450 are a group of heme-thiolate monooxygenases. In liver microsomes, this enzyme is involved in an NADPH-dependent electron transport pathway. It oxidizes a variety of structurally unrelated compounds, including steroids, fatty acids, and xenobiotics. The chain is Cytochrome P450 2A3 (Cyp2a3) from Rattus norvegicus (Rat).